The chain runs to 139 residues: uncharacterized protein (139 aa).

Residues 83–109 (LIPPKKTSPATSSSLKPPRRPRGCLNG) are disordered. A compositionally biased stretch (low complexity) spans 86-98 (PKKTSPATSSSLK).

It to M.pneumoniae MPN_091 and MPN_463.

This is an uncharacterized protein from Mycoplasma pneumoniae (strain ATCC 29342 / M129 / Subtype 1) (Mycoplasmoides pneumoniae).